The following is a 279-amino-acid chain: MDPNPRLLILLVLLAFSATVAVAEDGESTGGSKVSLGRRAGGFLHGLKKEAVVEGDHGVALDEVGPGLFDALFASLSMILVSEIGDETFIIAALMAMRHPKSIVLSGALSALYVMTVLSTGLGRIVPNLISRKHTNSAATVLYLFFGLRLLYIAWKSDPKGSQKKEMEEVEEKLESGQGKSTLRRFFGRFCTPIFLEAFILTFLAEWGDRSQIATIALATHKNAIGVAVGASLGHTVCTSLAVIGGSMLASKISQRTVATIGGVLFLGFSVSSYFYPPL.

The signal sequence occupies residues 1–23 (MDPNPRLLILLVLLAFSATVAVA). Helical transmembrane passes span 64-84 (VGPGLFDALFASLSMILVSEI), 103-123 (IVLSGALSALYVMTVLSTGLG), 135-155 (TNSAATVLYLFFGLRLLYIAW), 186-206 (FFGRFCTPIFLEAFILTFLAE), 224-244 (AIGVAVGASLGHTVCTSLAVI), and 258-278 (VATIGGVLFLGFSVSSYFYPP).

The protein belongs to the GDT1 family.

Its subcellular location is the membrane. The sequence is that of GDT1-like protein 3 from Oryza sativa subsp. japonica (Rice).